A 391-amino-acid polypeptide reads, in one-letter code: MIEVVAELSRGPVFLAGEALECVVTVTNPLPPTATSASSEALAWASAQIHCQFHASESRVALPPPDSSQPDVQPDSQTVFLPHRGERGQCILSTPPKILFCDLRLDPGESKSYSYSEVLPIEGPPSFRGQSVKYVYKLTIGCQRVNSPITLLRVPLRVLVLTGLQDVRFPQDEAVAPSSPFLEEDEGGKKDSWLAELAGERLMAATSCRSLHLYNISDGRGKVGTFGIFKSVYRLGEDVVGTLNLGEGTVACLQFSVSLQTEERVQPEYQRRRGAGGVPSVSHVTHARHQESCLHTTRTSFSLPIPLSSTPGFCTAIVSLKWRLHFEFVTSREPGLVLLPPVEQPEPTTWTGPEQVPVDTFSWDLPIKVLPTSPTLASYAAPGPSTSTITI.

The protein belongs to the RGP1 family. In terms of assembly, forms a complex with RIC1; the interaction enhances RAB6A GTPase activity. Interacts with RIC1. Interacts with RAB6A; the interaction is direct with a preference for RAB6A-GDP. Interacts with RAB33B.

Its subcellular location is the cytoplasm. It is found in the cytosol. The protein resides in the membrane. In terms of biological role, the RIC1-RGP1 complex acts as a guanine nucleotide exchange factor (GEF), which activates RAB6A by exchanging bound GDP for free GTP and may thereby required for efficient fusion of endosome-derived vesicles with the Golgi compartment. The RIC1-RGP1 complex participates in the recycling of mannose-6-phosphate receptors. The polypeptide is RAB6A-GEF complex partner protein 2 (Homo sapiens (Human)).